The following is a 776-amino-acid chain: Glucocorticoid receptor (776 aa).

3 disordered regions span residues 1–25, 47–86, and 394–415; these read MDPKDLLKPSSGSPAVRGSPHYNDK, SCPTSTASQSNTRQQQHFQKQLTATGDSTNGLNNNVPQPD, and SSPGIRSDASPSPSTSSTSTGP. The segment at 1–419 is modulating; that stretch reads MDPKDLLKPS…STSTGPPPKL (419 aa). The segment covering 47–83 has biased composition (polar residues); that stretch reads SCPTSTASQSNTRQQQHFQKQLTATGDSTNGLNNNVP. Residues 403 to 413 are compositionally biased toward low complexity; that stretch reads SPSPSTSSTST. NR C4-type zinc fingers lie at residues 420–440 and 456–480; these read CLVCSDEASGCHYGVLTCGSC and CAGRNDCIIDKIRRKNCPACRYRKC. A DNA-binding region (nuclear receptor) is located at residues 420–485; the sequence is CLVCSDEASG…RYRKCLQAGM (66 aa). The interval 486–522 is hinge; sequence NLEARKTKKKIKGIQQSTTATARESPETSMTRTLVPA. The 235-residue stretch at 523 to 757 folds into the NR LBD domain; it reads SVAQLTPTLI…FPDMLSEIIS (235 aa).

This sequence belongs to the nuclear hormone receptor family. NR3 subfamily. In terms of assembly, heteromultimeric cytoplasmic complex with HSP90. Upon ligand binding the complex undergoes a conformation change and moves to the nucleus, where it dissociates. Binds to DNA as a homodimer, and as heterodimer with NR3C2. Interaction with numerous other transcription factors modulates transcription activation. Expressed in liver with relative abundance.

The protein localises to the cytoplasm. Its subcellular location is the nucleus. It localises to the mitochondrion. The protein resides in the cytoskeleton. It is found in the spindle. The protein localises to the microtubule organizing center. Its subcellular location is the centrosome. Functionally, receptor for glucocorticoids (GC). Has a dual mode of action: as a transcription factor that binds to glucocorticoid response elements (GRE), both for nuclear and mitochondrial DNA, and as a modulator of other transcription factors. Affects inflammatory responses, cellular proliferation and differentiation in target tissues. Involved in chromatin remodeling. Plays a role in rapid mRNA degradation by binding to the 5' UTR of target mRNAs and interacting with PNRC2 in a ligand-dependent manner which recruits the RNA helicase UPF1 and the mRNA-decapping enzyme DCP1A, leading to RNA decay. Could act as a coactivator for STAT5-dependent transcription upon growth hormone (GH) stimulation and could reveal an essential role of hepatic GR in the control of body growth. Mediates glucocorticoid-induced apoptosis. Promotes accurate chromosome segregation during mitosis. May act as a tumor suppressor. May play a negative role in adipogenesis through the regulation of lipolytic and antilipogenic gene expression. In Xenopus laevis (African clawed frog), this protein is Glucocorticoid receptor (nr3c1).